We begin with the raw amino-acid sequence, 444 residues long: Nuclear envelope integral membrane protein 1 (444 aa).

An N-terminal signal peptide occupies residues 1–43; it reads MAGGMKVAVSPAVGPGPWGSGVGGGGTVRLLLILSGCLVYGTA. Asn-125 carries N-linked (GlcNAc...) asparagine glycosylation. A run of 5 helical transmembrane segments spans residues 161–181, 186–206, 216–236, 245–265, and 289–309; these read PKLF…DLLS, FYYS…IIFI, PIYV…QLVF, CYWQ…FAVC, and LCFM…IIIA. The tract at residues 186–297 is a; required for its colocalization with lamins at the nuclear envelope; it reads FYYSTGMSVG…GLCFMYSGIQ (112 aa). Residues 336 to 405 are b; required for interaction with RAN-GTP; sequence PVPPRLLTEE…LTPNEVSVHE (70 aa). The segment at 336–444 is required for nuclear localization; sequence PVPPRLLTEE…PAITQNNFLT (109 aa). Ser-368, Ser-424, and Ser-425 each carry phosphoserine.

Belongs to the NEMP family. Homooligomer. Interacts with RAN-GTP. Interacts with EMD. Phosphorylation may regulate its interaction with RAN-GTP.

The protein resides in the nucleus inner membrane. The protein localises to the nucleus envelope. In terms of biological role, together with EMD, contributes to nuclear envelope stiffness in germ cells. Required for female fertility. Essential for normal erythropoiesis. Required for efficient nuclear envelope opening and enucleation during the late stages of erythroblast maturation. This is Nuclear envelope integral membrane protein 1 (NEMP1) from Pongo abelii (Sumatran orangutan).